The chain runs to 158 residues: D-aminoacyl-tRNA deacylase (158 aa).

Residues Gly-138–Pro-139 carry the Gly-cisPro motif, important for rejection of L-amino acids motif.

This sequence belongs to the DTD family. Homodimer.

The protein localises to the cytoplasm. The enzyme catalyses glycyl-tRNA(Ala) + H2O = tRNA(Ala) + glycine + H(+). It carries out the reaction a D-aminoacyl-tRNA + H2O = a tRNA + a D-alpha-amino acid + H(+). Its function is as follows. An aminoacyl-tRNA editing enzyme that deacylates mischarged D-aminoacyl-tRNAs. Hydrolyzes correctly charged, achiral, glycyl-tRNA(Gly). Deacylates mischarged endogenous and E.coli glycyl-tRNA(Ala), protecting cells against glycine mischarging by AlaRS. Acts via tRNA-based rather than protein-based catalysis; rejects L-amino acids rather than detecting D-amino acids in the active site. By recycling D-aminoacyl-tRNA to D-amino acids and free tRNA molecules, this enzyme counteracts the toxicity associated with the formation of D-aminoacyl-tRNA entities in vivo and helps enforce protein L-homochirality. This is D-aminoacyl-tRNA deacylase from Drosophila melanogaster (Fruit fly).